Consider the following 713-residue polypeptide: Probable muscarinic acetylcholine receptor gar-1 (713 aa).

Over 1–20 (MPNYTVPPDPADTSWDSPYS) the chain is Extracellular. A glycan (N-linked (GlcNAc...) asparagine) is linked at Asn3. A helical transmembrane segment spans residues 21-41 (IPVQIVVWIIIIVLSLETIIG). Over 42–66 (NAMVVMAYRIERNISKQVSNRYIVS) the chain is Cytoplasmic. A helical membrane pass occupies residues 67–87 (LAISDLIIGIEGFPFFTVYVL). Topologically, residues 88–101 (NGDRWPLGWVACQT) are extracellular. Cysteines 99 and 180 form a disulfide. The chain crosses the membrane as a helical span at residues 102–122 (WLFLDYTLCLVSILTVLLITA). Topologically, residues 123–144 (DRYLSVCHTAKYLKWQSPTKTQ) are cytoplasmic. The helical transmembrane segment at 145 to 165 (LLIVMSWLLPAIIFGIMIYGW) threads the bilayer. Over 166–189 (QAMTGQSTSMSGAECSAPFLSNPY) the chain is Extracellular. A helical membrane pass occupies residues 190 to 210 (VNMGMYVAYYWTTLVAMLILY). At 211-633 (KGIHQAAKNL…QTKAEKRAHK (423 aa)) the chain is on the cytoplasmic side. 4 disordered regions span residues 256-350 (KEKA…SRRC), 381-403 (SRYS…VEKA), 427-475 (KNTD…KQAE), and 515-585 (LIRR…TDTF). 2 stretches are compositionally biased toward polar residues: residues 266 to 275 (SGYTSNQAGD) and 287 to 315 (PETS…NDQN). Basic and acidic residues-rich tracts occupy residues 320–333 (EEER…RESN) and 393–403 (HENDEKEVEKA). Low complexity predominate over residues 429 to 439 (TDSNNDSDTTS). The segment covering 444–457 (RSRKYKKNKRPRSS) has biased composition (basic residues). Residues 557–571 (LTVNNENRGETSSQP) are compositionally biased toward polar residues. Residues 634–656 (AFRTITFIVGFFAILWSPYYIMA) form a helical membrane-spanning segment. The Extracellular portion of the chain corresponds to 657–670 (TVYGFCKGECIPSF). A helical membrane pass occupies residues 671–693 (LYTLSYYMCYLNSSGNPFAYALA). Topologically, residues 694–713 (NRQFRSAFMRMFRGNFNKVA) are cytoplasmic.

It belongs to the G-protein coupled receptor 1 family. Muscarinic acetylcholine receptor subfamily. In terms of tissue distribution, expressed in head region of the larva. In adults, expression is seen in the periventricularis magnocellularis (PVM) neuron.

It is found in the cell membrane. In terms of biological role, the muscarinic acetylcholine receptor mediates various cellular responses, including inhibition of adenylate cyclase, breakdown of phosphoinositides and modulation of potassium channels through the action of G proteins. Primary transducing effect is Pi turnover. This chain is Probable muscarinic acetylcholine receptor gar-1 (gar-1), found in Caenorhabditis elegans.